The chain runs to 136 residues: Peptide methionine sulfoxide reductase MsrB (136 aa).

One can recognise a MsrB domain in the interval Glu6–Glu128. Zn(2+)-binding residues include Cys45, Cys48, Cys94, and Cys97. Cys117 acts as the Nucleophile in catalysis.

This sequence belongs to the MsrB Met sulfoxide reductase family. The cofactor is Zn(2+).

It catalyses the reaction L-methionyl-[protein] + [thioredoxin]-disulfide + H2O = L-methionyl-(R)-S-oxide-[protein] + [thioredoxin]-dithiol. This chain is Peptide methionine sulfoxide reductase MsrB, found in Photorhabdus laumondii subsp. laumondii (strain DSM 15139 / CIP 105565 / TT01) (Photorhabdus luminescens subsp. laumondii).